The following is a 430-amino-acid chain: Tyrosine--tRNA ligase (430 aa).

Tyr36 serves as a coordination point for L-tyrosine. A 'HIGH' region motif is present at residues 41-50; that stretch reads PTASSLHVGS. The L-tyrosine site is built by Tyr170 and Gln174. Positions 230–234 match the 'KMSKS' region motif; it reads KMGKT. An ATP-binding site is contributed by Lys233. Positions 362-427 constitute an S4 RNA-binding domain; sequence VPAFELFDEI…GKKNYHRLVL (66 aa).

The protein belongs to the class-I aminoacyl-tRNA synthetase family. TyrS type 1 subfamily. In terms of assembly, homodimer.

It is found in the cytoplasm. It catalyses the reaction tRNA(Tyr) + L-tyrosine + ATP = L-tyrosyl-tRNA(Tyr) + AMP + diphosphate + H(+). In terms of biological role, catalyzes the attachment of tyrosine to tRNA(Tyr) in a two-step reaction: tyrosine is first activated by ATP to form Tyr-AMP and then transferred to the acceptor end of tRNA(Tyr). This chain is Tyrosine--tRNA ligase, found in Desulfatibacillum aliphaticivorans.